Consider the following 275-residue polypeptide: Exosome complex component Rrp42 (275 aa).

It belongs to the RNase PH family. Rrp42 subfamily. In terms of assembly, component of the archaeal exosome complex. Forms a hexameric ring-like arrangement composed of 3 Rrp41-Rrp42 heterodimers. The hexameric ring associates with a trimer of Rrp4 and/or Csl4 subunits.

Its subcellular location is the cytoplasm. Functionally, non-catalytic component of the exosome, which is a complex involved in RNA degradation. Contributes to the structuring of the Rrp41 active site. This chain is Exosome complex component Rrp42, found in Sulfurisphaera tokodaii (strain DSM 16993 / JCM 10545 / NBRC 100140 / 7) (Sulfolobus tokodaii).